Reading from the N-terminus, the 351-residue chain is Phosphoribosylformylglycinamidine cyclo-ligase (351 aa).

The protein belongs to the AIR synthase family.

It is found in the cytoplasm. It carries out the reaction 2-formamido-N(1)-(5-O-phospho-beta-D-ribosyl)acetamidine + ATP = 5-amino-1-(5-phospho-beta-D-ribosyl)imidazole + ADP + phosphate + H(+). It functions in the pathway purine metabolism; IMP biosynthesis via de novo pathway; 5-amino-1-(5-phospho-D-ribosyl)imidazole from N(2)-formyl-N(1)-(5-phospho-D-ribosyl)glycinamide: step 2/2. In Burkholderia pseudomallei (strain 1710b), this protein is Phosphoribosylformylglycinamidine cyclo-ligase.